The sequence spans 601 residues: Glutathione-regulated potassium-efflux system protein KefB (601 aa).

The next 13 membrane-spanning stretches (helical) occupy residues 4–24 (SDFL…VPLA), 29–49 (IGAV…GLGF), 55–75 (EILH…GLEL), 87–107 (IFGV…GLLM), 115–135 (AAVV…LQLM), 152–172 (VLLF…LLAG), 177–197 (HFDW…LIGG), 207–227 (FIAA…LVLG), 230–250 (LFMD…GVLL), 268–288 (GLLL…GVLY), 291–311 (LLWV…VLYL), 324–344 (MQFA…FSTA), and 356–376 (ALLL…MKLV). Positions 400–519 (KPQVIVVGFG…AGVTQFSRET (120 aa)) constitute an RCK N-terminal domain.

It belongs to the monovalent cation:proton antiporter 2 (CPA2) transporter (TC 2.A.37) family. KefB subfamily. Interacts with the regulatory subunit KefG.

The protein resides in the cell inner membrane. Functionally, pore-forming subunit of a potassium efflux system that confers protection against electrophiles. Catalyzes K(+)/H(+) antiport. The protein is Glutathione-regulated potassium-efflux system protein KefB of Escherichia coli (strain ATCC 8739 / DSM 1576 / NBRC 3972 / NCIMB 8545 / WDCM 00012 / Crooks).